A 417-amino-acid polypeptide reads, in one-letter code: Type IV inositol polyphosphate 5-phosphatase 9 (417 aa).

2 catalytic regions span residues 258–273 and 339–354; these read DRVI…ISLP and KKRA…WYGN.

It belongs to the inositol polyphosphate 5-phosphatase family. Specifically expressed in roots.

It carries out the reaction a 1,2-diacyl-sn-glycero-3-phospho-(1D-myo-inositol-4,5-bisphosphate) + H2O = a 1,2-diacyl-sn-glycero-3-phospho-(1D-myo-inositol 4-phosphate) + phosphate. The catalysed reaction is a 1,2-diacyl-sn-glycero-3-phospho-(1D-myo-inositol-3,4,5-trisphosphate) + H2O = a 1,2-diacyl-sn-glycero-3-phospho-(1D-myo-inositol-3,4-bisphosphate) + phosphate. In terms of biological role, has phosphatase activity toward PtdIns(4,5)P2 and at a lower extent toward PtdIns(3,4,5)P3 but not toward Ins(1,4,5)P3. Functions in salt stress response by regulating reactive oxygen species (ROS) production, endocytosis, Ca(2+) influx and stress-responsive genes expression. This is Type IV inositol polyphosphate 5-phosphatase 9 from Arabidopsis thaliana (Mouse-ear cress).